Here is a 342-residue protein sequence, read N- to C-terminus: Polycomb group RING finger protein 2 (342 aa).

An RING-type zinc finger spans residues 18-57; sequence CALCGGYFIDATTIVECLHSFCKTCIVRYLETNKYCPMCD. Residues lysine 51 and lysine 88 each participate in a glycyl lysine isopeptide (Lys-Gly) (interchain with G-Cter in SUMO2) cross-link. The short motif at 81–95 is the Nuclear localization signal element; the sequence is KLVPGLFKDEMKRRR. Threonine 237 carries the phosphothreonine; by PKA modification. Residues 237 to 342 are disordered; sequence TLPTVPTPSE…MTVNGAPCPP (106 aa). Residues 243-253 show a composition bias toward polar residues; that stretch reads TPSEGTNTSGA. Residues 263-318 are compositionally biased toward low complexity; the sequence is APSPATLPATSSSLPSPATPSHGSPSSHGPPATHPTSPTPPSTAAGTTTATNGGTS. Positions 319 to 328 are enriched in polar residues; the sequence is NCLQTPSSTS. Residue threonine 334 is modified to Phosphothreonine; by PKA.

Exists as both a monomer and homodimer. Component of a PRC1-like complex. Interacts with CBX8, RING1 and RNF2. Interacts with CBX7. Interacts with PHC2. In terms of processing, phosphorylated. Homodimer formation is regulated by phosphorylation with only unphosphorylated proteins forming homodimers. Expressed in embryonic stem cells. Expressed in a variety of tumor cells and in neural tissues.

It is found in the nucleus. Its function is as follows. Transcriptional repressor. Binds specifically to the DNA sequence 5'-GACTNGACT-3'. Has tumor suppressor activity. May play a role in control of cell proliferation and/or neural cell development. Regulates proliferation of early T progenitor cells by maintaining expression of HES1. Also plays a role in antero-posterior specification of the axial skeleton and negative regulation of the self-renewal activity of hematopoietic stem cells. Component of a Polycomb group (PcG) multiprotein PRC1-like complex, a complex class required to maintain the transcriptionally repressive state of many genes, including Hox genes, throughout development. PcG PRC1 complex acts via chromatin remodeling and modification of histones; it mediates monoubiquitination of histone H2A 'Lys-119', rendering chromatin heritably changed in its expressibility. Within the PRC1-like complex, regulates RNF2 ubiquitin ligase activity. In Mus musculus (Mouse), this protein is Polycomb group RING finger protein 2 (Pcgf2).